Here is a 220-residue protein sequence, read N- to C-terminus: Ribosomal RNA large subunit methyltransferase E (220 aa).

Residues glycine 60, tryptophan 62, aspartate 92, aspartate 108, and aspartate 133 each coordinate S-adenosyl-L-methionine. Residue lysine 173 is the Proton acceptor of the active site. The tract at residues 198–220 (KPKASRDKSSETFILGRQLKHPR) is disordered.

The protein belongs to the class I-like SAM-binding methyltransferase superfamily. RNA methyltransferase RlmE family.

The protein resides in the cytoplasm. It catalyses the reaction uridine(2552) in 23S rRNA + S-adenosyl-L-methionine = 2'-O-methyluridine(2552) in 23S rRNA + S-adenosyl-L-homocysteine + H(+). In terms of biological role, specifically methylates the uridine in position 2552 of 23S rRNA at the 2'-O position of the ribose in the fully assembled 50S ribosomal subunit. In Burkholderia cenocepacia (strain HI2424), this protein is Ribosomal RNA large subunit methyltransferase E.